Consider the following 67-residue polypeptide: Large ribosomal subunit protein bL35 (67 aa).

The interval 22-45 is disordered; that stretch reads GKIKRWKSGGAHYNTKKSSKRKRH. The segment covering 35–45 has biased composition (basic residues); that stretch reads NTKKSSKRKRH.

Belongs to the bacterial ribosomal protein bL35 family.

The sequence is that of Large ribosomal subunit protein bL35 from Aquifex aeolicus (strain VF5).